A 555-amino-acid polypeptide reads, in one-letter code: Neutral amino acid transporter B(0) (555 aa).

Met-1 carries the post-translational modification N-acetylmethionine. The Cytoplasmic portion of the chain corresponds to Met-1–Ala-52. Residues Asn-53–Leu-82 traverse the membrane as a helical segment. The Extracellular segment spans residues Gly-83–Glu-95. The helical transmembrane segment at Leu-96 to Ala-117 threads the bilayer. Residues Ala-118–Trp-131 lie on the Cytoplasmic side of the membrane. A helical transmembrane segment spans residues Ala-132 to Leu-154. The Extracellular segment spans residues Lys-155–Cys-239. Residues Asn-164 and Asn-231 are each glycosylated (N-linked (GlcNAc...) asparagine). Residues Glu-240 to Leu-262 form a helical membrane-spanning segment. Over Gly-263–Arg-271 the chain is Cytoplasmic. The helical transmembrane segment at Phe-272–Val-299 threads the bilayer. Residues Ala-300–Ile-320 are Extracellular-facing. Residues Val-321–Phe-342 traverse the membrane as a helical segment. At Thr-343–Pro-347 the chain is on the cytoplasmic side. The discontinuously helical intramembrane region spans Tyr-348–Val-378. Over Glu-379 to His-387 the chain is Cytoplasmic. A helical transmembrane segment spans residues Ile-388–Phe-414. 3 residues coordinate Na(+): Gly-396, Thr-398, and Asn-400. The Extracellular portion of the chain corresponds to Ile-415 to Lys-427. The segment at residues Ile-428–Ser-461 is an intramembrane region (discontinuously helical). At Leu-462–Asp-474 the chain is on the extracellular side. A helical membrane pass occupies residues Trp-475–Leu-496. The Na(+) site is built by Asn-485 and Asp-489. Residues Gln-497–Met-555 lie on the Cytoplasmic side of the membrane. A phosphoserine mark is found at Ser-507, Ser-508, Ser-520, Ser-545, and Ser-553. Residues Leu-534–Met-555 form a disordered region.

This sequence belongs to the dicarboxylate/amino acid:cation symporter (DAACS) (TC 2.A.23) family. As to quaternary structure, homotrimer.

The protein localises to the cell membrane. The protein resides in the melanosome. The enzyme catalyses L-glutamine(out) + L-serine(in) + Na(+)(out) = L-glutamine(in) + L-serine(out) + Na(+)(in). The catalysed reaction is L-glutamine(in) + L-serine(out) + Na(+)(out) = L-glutamine(out) + L-serine(in) + Na(+)(in). It catalyses the reaction L-threonine(in) + L-glutamine(out) + Na(+)(out) = L-threonine(out) + L-glutamine(in) + Na(+)(in). It carries out the reaction L-threonine(out) + L-glutamine(in) + Na(+)(out) = L-threonine(in) + L-glutamine(out) + Na(+)(in). The enzyme catalyses L-asparagine(in) + L-glutamine(out) + Na(+)(out) = L-asparagine(out) + L-glutamine(in) + Na(+)(in). The catalysed reaction is L-asparagine(out) + L-glutamine(in) + Na(+)(out) = L-asparagine(in) + L-glutamine(out) + Na(+)(in). It catalyses the reaction L-glutamine(in) + L-alanine(out) + Na(+)(out) = L-glutamine(out) + L-alanine(in) + Na(+)(in). It carries out the reaction L-valine(out) + L-glutamine(in) + Na(+)(out) = L-valine(in) + L-glutamine(out) + Na(+)(in). The enzyme catalyses L-glutamine(in) + L-methionine(out) + Na(+)(out) = L-glutamine(out) + L-methionine(in) + Na(+)(in). The catalysed reaction is L-glutamine(in) + L-glutamate(out) + Na(+)(out) + H(+)(out) = L-glutamine(out) + L-glutamate(in) + Na(+)(in) + H(+)(in). It catalyses the reaction D-serine(in) + L-glutamine(out) + Na(+)(out) = D-serine(out) + L-glutamine(in) + Na(+)(in). It carries out the reaction D-serine(in) + L-alanine(out) + Na(+)(out) = D-serine(out) + L-alanine(in) + Na(+)(in). The enzyme catalyses nitrate(in) = nitrate(out). The catalysed reaction is iodide(out) = iodide(in). It catalyses the reaction thiocyanate(in) = thiocyanate(out). Down-regulated at acidic pH. Its function is as follows. Sodium-coupled antiporter of neutral amino acids. In a tri-substrate transport cycle, exchanges neutral amino acids between the extracellular and intracellular compartments, coupled to the inward cotransport of at least one sodium ion. The preferred substrate is the essential amino acid L-glutamine, a precursor for biosynthesis of proteins, nucleotides and amine sugars as well as an alternative fuel for mitochondrial oxidative phosphorylation. Exchanges L-glutamine with other neutral amino acids such as L-serine, L-threonine and L-asparagine in a bidirectional way. Provides L-glutamine to proliferating stem and activated cells driving the metabolic switch toward cell differentiation. The transport cycle is usually pH-independent, with the exception of L-glutamate. Transports extracellular L-glutamate coupled to the cotransport of one proton and one sodium ion in exchange for intracellular L-glutamine counter-ion. May provide for L-glutamate uptake in glial cells regulating glutamine/glutamate cycle in the nervous system. Can transport D-amino acids. Mediates D-serine release from the retinal glia potentially affecting NMDA receptor function in retinal neurons. Displays sodium- and amino acid-dependent but uncoupled channel-like anion conductance with a preference SCN(-) &gt;&gt; NO3(-) &gt; I(-) &gt; Cl(-). Through binding of the fusogenic protein syncytin-1/ERVW-1 may mediate trophoblasts syncytialization, the spontaneous fusion of their plasma membranes, an essential process in placental development. The protein is Neutral amino acid transporter B(0) (Slc1a5) of Rattus norvegicus (Rat).